A 225-amino-acid polypeptide reads, in one-letter code: Peptidyl-prolyl cis-trans isomerase D (225 aa).

Residues 1-22 (MKLQFFSFITLFACLFTTAIFA) form the signal peptide. One can recognise a PPIase cyclophilin-type domain in the interval 37–195 (YFDINHGDKQ…KEVIIVESGE (159 aa)). N139 is a glycosylation site (N-linked (GlcNAc...) asparagine). The short motif at 222 to 225 (HDEL) is the Prevents secretion from ER element.

It belongs to the cyclophilin-type PPIase family. PPIase B subfamily.

It is found in the endoplasmic reticulum lumen. It catalyses the reaction [protein]-peptidylproline (omega=180) = [protein]-peptidylproline (omega=0). Functionally, PPIases accelerate the folding of proteins. It catalyzes the cis-trans isomerization of proline imidic peptide bonds in oligopeptides. This Saccharomyces cerevisiae (strain ATCC 204508 / S288c) (Baker's yeast) protein is Peptidyl-prolyl cis-trans isomerase D.